Consider the following 492-residue polypeptide: Putative cytochrome P450 136 (492 aa).

Residue cysteine 439 coordinates heme.

The protein belongs to the cytochrome P450 family. Heme is required as a cofactor.

The protein is Putative cytochrome P450 136 (cyp136) of Mycobacterium tuberculosis (strain CDC 1551 / Oshkosh).